Consider the following 448-residue polypeptide: Cysteine--tRNA ligase (448 aa).

Cysteine 27 provides a ligand contact to Zn(2+). The 'HIGH' region motif lies at 29 to 39 (PTVYNYIHVGN). Residues cysteine 210, histidine 235, and glutamate 239 each coordinate Zn(2+). A 'KMSKS' region motif is present at residues 267-271 (KMSKS). An ATP-binding site is contributed by lysine 270.

Belongs to the class-I aminoacyl-tRNA synthetase family. In terms of assembly, monomer. Zn(2+) is required as a cofactor.

Its subcellular location is the cytoplasm. It carries out the reaction tRNA(Cys) + L-cysteine + ATP = L-cysteinyl-tRNA(Cys) + AMP + diphosphate. The polypeptide is Cysteine--tRNA ligase (Lactococcus lactis subsp. cremoris (strain MG1363)).